Consider the following 267-residue polypeptide: 2-keto-3-deoxy-L-rhamnonate aldolase (267 aa).

The Proton acceptor role is filled by His-49. Gln-151 contacts substrate. A Mg(2+)-binding site is contributed by Glu-153. Ala-178 and Asp-179 together coordinate substrate. Position 179 (Asp-179) interacts with Mg(2+).

It belongs to the HpcH/HpaI aldolase family. KDR aldolase subfamily. In terms of assembly, homohexamer. Mg(2+) is required as a cofactor.

It carries out the reaction 2-dehydro-3-deoxy-L-rhamnonate = (S)-lactaldehyde + pyruvate. In terms of biological role, catalyzes the reversible retro-aldol cleavage of 2-keto-3-deoxy-L-rhamnonate (KDR) to pyruvate and lactaldehyde. This chain is 2-keto-3-deoxy-L-rhamnonate aldolase, found in Escherichia coli O17:K52:H18 (strain UMN026 / ExPEC).